The chain runs to 139 residues: Protein cornichon homolog 4 (139 aa).

3 helical membrane-spanning segments follow: residues 5-25 (VFLFSLLDCCALIFLSVYFII), 57-77 (IVTVLMLVSLHWFIFLLNLPV), and 118-138 (LGFYLLCFFMYLYSMILALIN).

This sequence belongs to the cornichon family. As to quaternary structure, interacts with Sec23/24 complex components SEC24B and SEC24D. Interacts with CCR5. Interacts with ADRB2 in the early secretory pathway.

It localises to the membrane. Its subcellular location is the endoplasmic reticulum. The protein localises to the endoplasmic reticulum-Golgi intermediate compartment. Involved in G protein-coupled receptors (GPCRs) trafficking from the endoplasmic reticulum to the cell surface; it promotes the exit of GPCRs from the early secretory pathway, likely through interaction with the COPII machinery. This Mus musculus (Mouse) protein is Protein cornichon homolog 4 (Cnih4).